The sequence spans 882 residues: DNA mismatch repair protein MutS (882 aa).

ATP is bound at residue 656–663 (GPNASGKS).

It belongs to the DNA mismatch repair MutS family.

This protein is involved in the repair of mismatches in DNA. It is possible that it carries out the mismatch recognition step. This protein has a weak ATPase activity. The polypeptide is DNA mismatch repair protein MutS (Synechococcus sp. (strain ATCC 27144 / PCC 6301 / SAUG 1402/1) (Anacystis nidulans)).